We begin with the raw amino-acid sequence, 482 residues long: UDP-N-acetylmuramoyl-L-alanyl-D-glutamate--2,6-diaminopimelate ligase (482 aa).

S24 lines the UDP-N-acetyl-alpha-D-muramoyl-L-alanyl-D-glutamate pocket. 105–111 (GTNGKTT) contributes to the ATP binding site. UDP-N-acetyl-alpha-D-muramoyl-L-alanyl-D-glutamate is bound by residues 147–148 (TT), S174, Q180, and R182. K214 is subject to N6-carboxylysine. Meso-2,6-diaminopimelate contacts are provided by residues R378, 402–405 (DNPR), G453, and E457. A Meso-diaminopimelate recognition motif motif is present at residues 402-405 (DNPR).

It belongs to the MurCDEF family. MurE subfamily. It depends on Mg(2+) as a cofactor. In terms of processing, carboxylation is probably crucial for Mg(2+) binding and, consequently, for the gamma-phosphate positioning of ATP.

The protein resides in the cytoplasm. The catalysed reaction is UDP-N-acetyl-alpha-D-muramoyl-L-alanyl-D-glutamate + meso-2,6-diaminopimelate + ATP = UDP-N-acetyl-alpha-D-muramoyl-L-alanyl-gamma-D-glutamyl-meso-2,6-diaminopimelate + ADP + phosphate + H(+). It participates in cell wall biogenesis; peptidoglycan biosynthesis. Its function is as follows. Catalyzes the addition of meso-diaminopimelic acid to the nucleotide precursor UDP-N-acetylmuramoyl-L-alanyl-D-glutamate (UMAG) in the biosynthesis of bacterial cell-wall peptidoglycan. The chain is UDP-N-acetylmuramoyl-L-alanyl-D-glutamate--2,6-diaminopimelate ligase from Lawsonia intracellularis (strain PHE/MN1-00).